The chain runs to 357 residues: SNF1-related protein kinase regulatory subunit gamma-like PV42b (357 aa).

CBS domains are found at residues 16–97 (MIDK…DGES), 113–185 (HCPE…SSQL), 198–273 (AIHN…WLPL), and 293–351 (STPG…ALLS).

It belongs to the 5'-AMP-activated protein kinase gamma subunit family. Expressed highly in rosette leaves, cauline leaves, open flowers, developing siliques and dry seeds, but at a low level in stems and floral buds.

Its function is as follows. Plays redundant role with PV42a in regulating male gametogenesis and pollen tube guidance. This Arabidopsis thaliana (Mouse-ear cress) protein is SNF1-related protein kinase regulatory subunit gamma-like PV42b (PV42B).